A 418-amino-acid chain; its full sequence is Isocitrate dehydrogenase [NADP] (418 aa).

Position 106 (threonine 106) interacts with NADP(+). Residues serine 115, asparagine 117, arginine 121, arginine 131, and arginine 155 each contribute to the D-threo-isocitrate site. Serine 115 carries the post-translational modification Phosphoserine. A Phosphothreonine modification is found at threonine 193. Aspartate 309 provides a ligand contact to Mg(2+). Residues 341-347, asparagine 354, tyrosine 393, and arginine 397 each bind NADP(+); that span reads HGTAPKY.

It belongs to the isocitrate and isopropylmalate dehydrogenases family. As to quaternary structure, homodimer. It depends on Mg(2+) as a cofactor. Requires Mn(2+) as cofactor.

Its subcellular location is the secreted. It catalyses the reaction D-threo-isocitrate + NADP(+) = 2-oxoglutarate + CO2 + NADPH. Functionally, catalyzes the oxidative decarboxylation of isocitrate to 2-oxoglutarate and carbon dioxide with the concomitant reduction of NADP(+). The polypeptide is Isocitrate dehydrogenase [NADP] (icd) (Pseudomonas aeruginosa (strain UCBPP-PA14)).